Consider the following 452-residue polypeptide: Phosphoglucosamine mutase (452 aa).

Catalysis depends on S103, which acts as the Phosphoserine intermediate. Mg(2+)-binding residues include S103, D244, D246, and D248. S103 carries the post-translational modification Phosphoserine.

Belongs to the phosphohexose mutase family. The cofactor is Mg(2+). In terms of processing, activated by phosphorylation.

It carries out the reaction alpha-D-glucosamine 1-phosphate = D-glucosamine 6-phosphate. In terms of biological role, catalyzes the conversion of glucosamine-6-phosphate to glucosamine-1-phosphate. This chain is Phosphoglucosamine mutase, found in Fusobacterium nucleatum subsp. nucleatum (strain ATCC 25586 / DSM 15643 / BCRC 10681 / CIP 101130 / JCM 8532 / KCTC 2640 / LMG 13131 / VPI 4355).